Consider the following 770-residue polypeptide: 1,4-alpha-glucan branching enzyme GlgB (770 aa).

Asp-433 (nucleophile) is an active-site residue. Glu-486 (proton donor) is an active-site residue.

It belongs to the glycosyl hydrolase 13 family. GlgB subfamily. Monomer.

It carries out the reaction Transfers a segment of a (1-&gt;4)-alpha-D-glucan chain to a primary hydroxy group in a similar glucan chain.. It participates in glycan biosynthesis; glycogen biosynthesis. Its function is as follows. Catalyzes the formation of the alpha-1,6-glucosidic linkages in glycogen by scission of a 1,4-alpha-linked oligosaccharide from growing alpha-1,4-glucan chains and the subsequent attachment of the oligosaccharide to the alpha-1,6 position. The protein is 1,4-alpha-glucan branching enzyme GlgB (glgB) of Synechocystis sp. (strain ATCC 27184 / PCC 6803 / Kazusa).